The chain runs to 414 residues: Poly(3-hydroxyalkanoate) depolymerase C (414 aa).

The signal sequence occupies residues 1 to 37 (MLAKQIKKANSRSTLLRKSLLFAAPIILAVSSSSVYA). Serine 154 (charge relay system) is an active-site residue.

This sequence belongs to the AB hydrolase superfamily. Lipase family.

It is found in the secreted. Functionally, specific for poly(hydroxyalkanoic acid) consisting of monomers of four or five carbon atoms and for P-nitrophenylbutyrate as substrates. The polypeptide is Poly(3-hydroxyalkanoate) depolymerase C (phaZ1) (Paucimonas lemoignei (Pseudomonas lemoignei)).